A 328-amino-acid chain; its full sequence is Cytochrome c biogenesis protein CcsA (328 aa).

8 consecutive transmembrane segments (helical) span residues 15–35, 36–56, 68–88, 97–117, 142–162, 236–256, 263–283, and 297–317; these read FLVLFLTMLVYWAGAAFPSIP, LLPGLGSTGVAIANLCIAALL, ISNLYESLFFLAWGVTAVHLI, LVGVVTTPVAMGITAFATLSL, VMMLSYAALMVGSLMAIAFLI, VIGLGFPLLTIGIIAGAVWAN, WSWDPKETWALITWLVFAAYL, and AILAASGFVVVWVCYLGVNLL.

The protein belongs to the CcmF/CycK/Ccl1/NrfE/CcsA family. As to quaternary structure, may interact with ccs1.

The protein resides in the cellular thylakoid membrane. Its function is as follows. Required during biogenesis of c-type cytochromes (cytochrome c6 and cytochrome f) at the step of heme attachment. This is Cytochrome c biogenesis protein CcsA from Microcystis aeruginosa (strain NIES-843 / IAM M-2473).